We begin with the raw amino-acid sequence, 345 residues long: Phosphoribosylformylglycinamidine cyclo-ligase (345 aa).

It belongs to the AIR synthase family.

It localises to the cytoplasm. It carries out the reaction 2-formamido-N(1)-(5-O-phospho-beta-D-ribosyl)acetamidine + ATP = 5-amino-1-(5-phospho-beta-D-ribosyl)imidazole + ADP + phosphate + H(+). Its pathway is purine metabolism; IMP biosynthesis via de novo pathway; 5-amino-1-(5-phospho-D-ribosyl)imidazole from N(2)-formyl-N(1)-(5-phospho-D-ribosyl)glycinamide: step 2/2. This chain is Phosphoribosylformylglycinamidine cyclo-ligase, found in Escherichia coli (strain K12 / MC4100 / BW2952).